A 116-amino-acid chain; its full sequence is Small ribosomal subunit protein uS8c (116 aa).

The protein belongs to the universal ribosomal protein uS8 family. As to quaternary structure, part of the 30S ribosomal subunit.

It localises to the plastid. It is found in the chloroplast. In terms of biological role, one of the primary rRNA binding proteins, it binds directly to 16S rRNA central domain where it helps coordinate assembly of the platform of the 30S subunit. The polypeptide is Small ribosomal subunit protein uS8c (rps8) (Musa acuminata (Banana)).